The chain runs to 563 residues: MNTFLIDYRDIQTPKKGFSGLFNDYSHEGQMHDKLTEKFFHFDYLKEADYYKHLNTLVSRSFRRKELAELLIRQNRRFGTAAKHLESIEKALSPRCMFVITGQQPGLFTGPLYSIYKALTAVIVAERQKAMFPEYDFIPLFWIEGEDHDFEESATTSIIDAGQIQQVSLDPWKRLPGQMVSRSAMGPGITDTLSDFTSMLQESDYREQIVSMLQEIYTPDSSLELAFGKTMAHLFKDYPLIFLSASDPDFKNLAKEIYYRELATCPHTSHTIIEQSSLLENMGYQTQVKPRAVNLFYVNHHDQRMKIEQSSADSFSIVPDRHRYSRHQILEMCDDHPERFSPNVILRPVVQDHVLPTFAYIAGPGEISYMAQYRKTYEHFGLKMPFIIPRGSFTLIEPAVRRTMDKVLQKTGRLTQSRKQLYHTAFHDLRILQKKAISGAENHDFDTLLDRTEKNILAELEALSPTLGKLDPNLEQVLAGSLVQIEKVMTGIRQKTHRAGRRKHDELVAQLDKAAAGIFPEDLPQERVINIFYYLNKYGWGILDAFATMLRAHSSESHIILEL.

The protein belongs to the BshC family.

The protein is Putative cysteine ligase BshC of Chlorobium phaeobacteroides (strain BS1).